Here is a 301-residue protein sequence, read N- to C-terminus: Pantothenate synthetase (301 aa).

30–37 (MGNLHEGH) is a binding site for ATP. The Proton donor role is filled by H37. Q61 contributes to the (R)-pantoate binding site. Position 61 (Q61) interacts with beta-alanine. ATP is bound at residue 149–152 (GEKD). Q155 serves as a coordination point for (R)-pantoate. Residues V178 and 186–189 (MSSR) contribute to the ATP site.

It belongs to the pantothenate synthetase family. As to quaternary structure, homodimer.

It is found in the cytoplasm. It carries out the reaction (R)-pantoate + beta-alanine + ATP = (R)-pantothenate + AMP + diphosphate + H(+). The protein operates within cofactor biosynthesis; (R)-pantothenate biosynthesis; (R)-pantothenate from (R)-pantoate and beta-alanine: step 1/1. Catalyzes the condensation of pantoate with beta-alanine in an ATP-dependent reaction via a pantoyl-adenylate intermediate. This chain is Pantothenate synthetase, found in Vibrio vulnificus (strain YJ016).